The sequence spans 354 residues: Holliday junction branch migration complex subunit RuvB (354 aa).

Residues 5–197 (TDDFSAADLP…FGIVARLEFY (193 aa)) form a large ATPase domain (RuvB-L) region. Residues Leu-36, Arg-37, Gly-78, Lys-81, Thr-82, Thr-83, 144–146 (EDY), Arg-187, Tyr-197, and Arg-234 contribute to the ATP site. Thr-82 provides a ligand contact to Mg(2+). The small ATPAse domain (RuvB-S) stretch occupies residues 198 to 268 (TAEELGRIVR…IANKALAMLD (71 aa)). The head domain (RuvB-H) stretch occupies residues 271-354 (PQGFDVMDRK…PPVSGNDMFT (84 aa)). DNA is bound by residues Arg-307, Arg-326, and Arg-331.

Belongs to the RuvB family. As to quaternary structure, homohexamer. Forms an RuvA(8)-RuvB(12)-Holliday junction (HJ) complex. HJ DNA is sandwiched between 2 RuvA tetramers; dsDNA enters through RuvA and exits via RuvB. An RuvB hexamer assembles on each DNA strand where it exits the tetramer. Each RuvB hexamer is contacted by two RuvA subunits (via domain III) on 2 adjacent RuvB subunits; this complex drives branch migration. In the full resolvosome a probable DNA-RuvA(4)-RuvB(12)-RuvC(2) complex forms which resolves the HJ.

The protein resides in the cytoplasm. The catalysed reaction is ATP + H2O = ADP + phosphate + H(+). In terms of biological role, the RuvA-RuvB-RuvC complex processes Holliday junction (HJ) DNA during genetic recombination and DNA repair, while the RuvA-RuvB complex plays an important role in the rescue of blocked DNA replication forks via replication fork reversal (RFR). RuvA specifically binds to HJ cruciform DNA, conferring on it an open structure. The RuvB hexamer acts as an ATP-dependent pump, pulling dsDNA into and through the RuvAB complex. RuvB forms 2 homohexamers on either side of HJ DNA bound by 1 or 2 RuvA tetramers; 4 subunits per hexamer contact DNA at a time. Coordinated motions by a converter formed by DNA-disengaged RuvB subunits stimulates ATP hydrolysis and nucleotide exchange. Immobilization of the converter enables RuvB to convert the ATP-contained energy into a lever motion, pulling 2 nucleotides of DNA out of the RuvA tetramer per ATP hydrolyzed, thus driving DNA branch migration. The RuvB motors rotate together with the DNA substrate, which together with the progressing nucleotide cycle form the mechanistic basis for DNA recombination by continuous HJ branch migration. Branch migration allows RuvC to scan DNA until it finds its consensus sequence, where it cleaves and resolves cruciform DNA. This is Holliday junction branch migration complex subunit RuvB from Polaromonas sp. (strain JS666 / ATCC BAA-500).